Reading from the N-terminus, the 1090-residue chain is Leucine-rich repeat receptor-like serine/threonine-protein kinase RGI4 (1090 aa).

An N-terminal signal peptide occupies residues 1 to 20 (MPRNPRFCFFLFLLFHSSLF). At 21 to 702 (FSIPCFSIDE…IQTRHRSAVK (682 aa)) the chain is on the extracellular side. The LRR 1 repeat unit spans residues 36–59 (LSWKSQLNISGDALSSWKASESNP). An N-linked (GlcNAc...) asparagine glycan is attached at Asn43. Cysteines 60 and 67 form a disulfide. 4 LRR repeats span residues 95-119 (IKSL…LGDL), 120-143 (SELE…IFKL), 145-166 (KLKI…ELGN), and 168-191 (VNLI…IGEL). Asn107 carries N-linked (GlcNAc...) asparagine glycosylation. 4 consecutive short sequence motifs (small peptide recognition) follow at residues 176–177 (FD), 198–201 (RAGG), 221–226 (TLGLAE), and Tyr249. LRR repeat units follow at residues 216–240 (CESL…IGNL), 242–264 (KVQT…IGNC), 265–288 (TELQ…MGRL), 289–312 (KKLQ…LGTC), 314–335 (ELFL…SFGN), 336–360 (LPNL…LANC), and 362–386 (KLTH…KLTS). N-linked (GlcNAc...) asparagine glycosylation is present at Asn263. Residues 269-273 (NLYLY) carry the CLE45 peptide binding motif. Positions 271-273 (YLY) match the Small peptide recognition motif. Short sequence motifs (small peptide recognition) lie at residues 319 to 322 (DLSE) and 341 to 343 (ELQ). Residue Asn359 is glycosylated (N-linked (GlcNAc...) asparagine). 2 short sequence motifs (small peptide recognition) span residues 389–393 (MFFAW) and 415–418 (DLSY). LRR repeat units lie at residues 408–432 (CQEL…IFEI), 434–456 (NLTK…IGNC), 457–480 (TNLY…IGNL), 481–504 (KNLN…ISGC), 506–526 (SLEF…GTLP), 527–550 (KSLQ…IGSL), 551–574 (TELT…ISSC), 576–598 (SLQL…LGRI), 600–622 (SLAI…RFSS), 623–646 (LTNL…LADL), and 647–670 (QNLV…LFFR). N-linked (GlcNAc...) asparagine glycans are attached at residues Asn420 and Asn434. Positions 437–441 (KLLLL) match the Small peptide recognition motif. Residue Asn455 is glycosylated (N-linked (GlcNAc...) asparagine). Positions 461-463 (RLR) match the Small peptide recognition motif. N-linked (GlcNAc...) asparagine glycosylation occurs at Asn606. Asn653 is a glycosylation site (N-linked (GlcNAc...) asparagine). Residues 703–723 (VTMSILVAASVVLVLMAVYTL) form a helical membrane-spanning segment. Topologically, residues 724–1090 (VKAQRITGKQ…CSFAYSDESV (367 aa)) are cytoplasmic. The 283-residue stretch at 758–1040 (LTSANVIGTG…KDIVAMLKEI (283 aa)) folds into the Protein kinase domain. ATP contacts are provided by residues 764-772 (IGTGSSGVV) and Lys786. 2 positions are modified to phosphotyrosine: Tyr829 and Tyr869. Catalysis depends on Asp882, which acts as the Proton acceptor. At Tyr932 the chain carries Phosphotyrosine. The LRR 24 repeat unit spans residues 1037 to 1060 (LKEIRQFDMDRSESDMIKGGKCEK). Residues 1054–1079 (KGGKCEKWQPQPLPPEKIVSTPRGSS) form a disordered region.

The protein belongs to the protein kinase superfamily. Ser/Thr protein kinase family. In terms of assembly, self-interacts. Interacts with RGF1; this interaction triggers its phosphorylation and ubiquitination and the formation of heterodimers with SERK1. In terms of processing, autophosphorylated. Phosphorylated and ubiquitinated upon interaction with RGF1, thus leading to activation a subsequent degradation. As to expression, expressed in floers, pollen grains and stipules. Present in roots.

Its subcellular location is the cell membrane. It carries out the reaction L-seryl-[protein] + ATP = O-phospho-L-seryl-[protein] + ADP + H(+). The enzyme catalyses L-threonyl-[protein] + ATP = O-phospho-L-threonyl-[protein] + ADP + H(+). Receptor with a serine/threonine-protein kinase activity. Together with SKM1, LRR-rich receptor-like kinase (LRR-RLK) required for male fertility by the perception of CLE43 and CLE45 peptides and the transduction of their promoting action in pollen tubes, especially under relatively high temperature (at 30 degrees Celsius), thus conferring tolerance against high temperature probably through the maintenance of mitochondrial activity. Seems to not be involved in the perception of CLE45 peptide in roots. Together with RGI1, RGI2, RGI3, RGI4 and RGI5, acts as receptor of RGF1, a peptide hormone that maintains the postembryonic root stem cell niche by regulating the expression levels and patterns of the transcription factor PLETHORA (PLT). Links RGF1 signal with its downstream components. In Arabidopsis thaliana (Mouse-ear cress), this protein is Leucine-rich repeat receptor-like serine/threonine-protein kinase RGI4.